The primary structure comprises 804 residues: E3 UFM1-protein ligase 1 homolog (804 aa).

Methionine 1 is subject to N-acetylmethionine. Residues 397-483 (IHPSSKSSES…VKAQESNNII (87 aa)) form a disordered region. Low complexity predominate over residues 400-409 (SSKSSESTES). Basic and acidic residues predominate over residues 463 to 475 (LDSKAGGKKESVK).

It belongs to the UFL1 family.

E3 UFM1-protein ligase that mediates ufmylation of target proteins. The chain is E3 UFM1-protein ligase 1 homolog from Arabidopsis thaliana (Mouse-ear cress).